The chain runs to 80 residues: Putative membrane protein insertion efficiency factor (80 aa).

This sequence belongs to the UPF0161 family.

It is found in the cell membrane. Functionally, could be involved in insertion of integral membrane proteins into the membrane. In Limosilactobacillus fermentum (strain NBRC 3956 / LMG 18251) (Lactobacillus fermentum), this protein is Putative membrane protein insertion efficiency factor.